Here is a 583-residue protein sequence, read N- to C-terminus: MPLRKMKIPFLLLFFLWEAESHAASRPNIILVMADDLGIGDPGCYGNKTIRTPNIDRLASGGVKLTQHLAASPLCTPSRAAFMTGRYPVRSGMASWSRTGVFLFTASSGGLPTDEITFAKLLKDQGYSTALIGKWHLGMSCHSKTDFCHHPLHHGFNYFYGISLTNLRDCKPGEGSVFTTGFKRLVFLPLQIVGVTLLTLAALNCLGLLHVPLGVFFSLLFLAALILTLFLGFLHYFRPLNCFMMRNYEIIQQPMSYDNLTQRLTVEAAQFIQRNTETPFLLVLSYLHVHTALFSSKDFAGKSQHGVYGDAVEEMDWSVGQILNLLDELRLANDTLIYFTSDQGAHVEEVSSKGEIHGGSNGIYKGGKANNWEGGIRVPGILRWPRVIQAGQKIDEPTSNMDIFPTVAKLAGAPLPEDRIIDGRDLMPLLEGKSQRSDHEFLFHYCNAYLNAVRWHPQNSTSIWKAFFFTPNFNPVGSNGCFATHVCFCFGSYVTHHDPPLLFDISKDPRERNPLTPASEPRFYEILKVMQEAADRHTQTLPEVPDQFSWNNFLWKPWLQLCCPSTGLSCQCDREKQDKRLSR.

A signal peptide spans 1 to 21 (MPLRKMKIPFLLLFFLWEAES). Residues 22–184 (HAASRPNIIL…GSVFTTGFKR (163 aa)) lie on the Lumenal side of the membrane. Ca(2+) is bound by residues D35 and D36. Residue N47 is glycosylated (N-linked (GlcNAc...) asparagine). C75 contacts Ca(2+). C75 (nucleophile) is an active-site residue. C75 is subject to 3-oxoalanine (Cys). H136 is an active-site residue. Cystine bridges form between C141-C148 and C170-C242. The helical transmembrane segment at 185–208 (LVFLPLQIVGVTLLTLAALNCLGL) threads the bilayer. Over 209–212 (LHVP) the chain is Cytoplasmic. A helical transmembrane segment spans residues 213 to 234 (LGVFFSLLFLAALILTLFLGFL). At 235–583 (HYFRPLNCFM…REKQDKRLSR (349 aa)) the chain is on the lumenal side. N259 carries N-linked (GlcNAc...) asparagine glycosylation. D342 and Q343 together coordinate Ca(2+). 4 disulfides stabilise this stretch: C446–C489, C481–C487, C562–C570, and C563–C572.

This sequence belongs to the sulfatase family. As to quaternary structure, homodimer. The cofactor is Ca(2+). In terms of processing, the conversion to 3-oxoalanine (also known as C-formylglycine, FGly), of a serine or cysteine residue in prokaryotes and of a cysteine residue in eukaryotes, is critical for catalytic activity.

Its subcellular location is the cytoplasmic vesicle. The protein resides in the secretory vesicle. It localises to the microneme membrane. It is found in the endoplasmic reticulum membrane. The enzyme catalyses dehydroepiandrosterone 3-sulfate + H2O = 3beta-hydroxyandrost-5-en-17-one + sulfate + H(+). It carries out the reaction estrone 3-sulfate + H2O = estrone + sulfate + H(+). Its function is as follows. Catalyzes the conversion of sulfated steroid precursors, such as dehydroepiandrosterone sulfate (DHEA-S) and estrone sulfate to the free steroid. This chain is Steryl-sulfatase (STS), found in Homo sapiens (Human).